Here is a 157-residue protein sequence, read N- to C-terminus: Large ribosomal subunit protein uL11 (157 aa).

The protein belongs to the universal ribosomal protein uL11 family. In terms of assembly, part of the ribosomal stalk of the 50S ribosomal subunit. Interacts with L10 and the large rRNA to form the base of the stalk. L10 forms an elongated spine to which L12 dimers bind in a sequential fashion forming a multimeric L10(L12)X complex.

Forms part of the ribosomal stalk which helps the ribosome interact with GTP-bound translation factors. In Methanocorpusculum labreanum (strain ATCC 43576 / DSM 4855 / Z), this protein is Large ribosomal subunit protein uL11.